The primary structure comprises 139 residues: MGCNSLSMIKVRLQNLFDNDEVALLKITCYTDKLILLTNALAKAVIHTIKLNGIVFIHVITSSEVCPDNNIVVKSNFTTMPILQNGGYIWELIELTHCSQSNGLMVDNCEIKFSKRLSDSVMTNYMNQISDLLGLDLNS.

Residues D136–S139 carry the DLNP; interaction with MAP1B motif.

Belongs to the pneumovirus non-structural protein 1 family. In terms of assembly, monomer. Homomultimer. Heteromultimer with NS2. Interacts with the matrix protein M. Interacts with host ELOC and CUL2; this interaction allows NS1 to form an active E3 ligase with ELOC and CUL2. Interacts with host IRF3; this interaction leads to the disrupted association of IRF3 with CREBBP and thus reduced binding of IRF3 to the IFN-beta promoter. Interacts with host MAVS; this interaction prevents MAVS binding to RIGI and inhibits signaling pathway leading to interferon production. Interacts with host MAP1B/microtubule-associated protein 1B. Interacts with host TRIM25 (via SPRY domain); this interaction suppresses RIGI ubiquitination and results in decreased interaction between RIGI and MAVS.

The protein localises to the host cytoplasm. The protein resides in the host mitochondrion. Its subcellular location is the host nucleus. Its function is as follows. Plays a major role in antagonizing the type I IFN-mediated antiviral response by degrading or inhibiting multiple cellular factors required for either IFN induction or response pathways. Acts cooperatively with NS2 to repress activation and nuclear translocation of host IFN-regulatory factor IRF3. Also disrupts the association of IRF3 with CREBBP. Interacts with host mitochondrial-associated membrane (MAM) MAVS and prevents the interaction with RIGI. Interacts with TRIM25 to suppress TRIM25-mediated RIGI ubiquitination and thereby RIGI-MAVS interaction. Together with NS2, participates in the proteasomal degradation of host STAT2, IRF3, IRF7, TBK1 and RIGI through a NS-degradasome involving CUL2 and Elongin-C. The degradasome requires an intact mitochondrial MAVS. Decreases the levels of host TRAF3 and IKBKE/IKK-epsilon. As functions other than disruptions of the type I IFN-mediated antiviral signaling pathways, induces host SOCS1 and SOCS3 expression. Suppresses premature apoptosis by an NF-kappa-B-dependent, interferon-independent mechanism and thus facilitates virus growth. Additionally, NS1 may serve some inhibitory role in viral transcription and RNA replication. Suppresses proliferation and activation of host CD103+ CD8+ cytotoxic T-lymphocytes and Th17 helper T-lymphocytes. This Human respiratory syncytial virus B (strain 18537) protein is Non-structural protein 1 (1C).